The primary structure comprises 125 residues: PCNA-associated factor (125 aa).

A disordered region spans residues 1-125; that stretch reads MVRTKADSAG…SEEAADSDDE (125 aa). Residues 8–17 are compositionally biased toward low complexity; the sequence is SAGSSASSGS. A D-box motif is present at residues 28-39; sequence RKTFGSSSSGSN. The short motif at 68–79 is the PIP-box element; it reads QKGIGEFFGSPS. The KEN box signature appears at 85-87; sequence KEN. The short motif at 95 to 107 is the Initiation motif element; it reads EAGGSGAGKAPRK. Acidic residues predominate over residues 115-125; the sequence is PSEEAADSDDE.

In terms of assembly, interacts with pcna.

The protein resides in the nucleus. Its subcellular location is the cytoplasm. It is found in the perinuclear region. PCNA-binding protein that acts as a regulator of DNA repair during DNA replication. Following DNA damage, the interaction with pcna is disrupted, facilitating the interaction between monoubiquitinated pcna and the translesion DNA synthesis DNA polymerase eta (polh) at stalled replisomes, facilitating the bypass of replication-fork-blocking lesions. Also acts as a regulator of centrosome number. This is PCNA-associated factor from Xenopus tropicalis (Western clawed frog).